The following is a 196-amino-acid chain: CASP-like protein 1D1 (196 aa).

Residues 1–18 (MASTDKPDRESIKSEEAP) are compositionally biased toward basic and acidic residues. Residues 1-22 (MASTDKPDRESIKSEEAPAAHP) are disordered. Residues 1-29 (MASTDKPDRESIKSEEAPAAHPRRSNYSS) lie on the Cytoplasmic side of the membrane. Residues 30-50 (VHVALRFLLFAASVTAVVVMV) form a helical membrane-spanning segment. Residues 51–84 (TAKQTKIVPVPGLPISVPLEAKFSDSPAFLYFIS) are Extracellular-facing. Residues 85 to 105 (ALSVAGLYGILTTLAAISIVL) form a helical membrane-spanning segment. The Cytoplasmic portion of the chain corresponds to 106–112 (KPAYATR). A helical transmembrane segment spans residues 113-133 (FLLHFALLDVLMLGIVASATG). At 134–167 (AAGGVAYVGLKGNSHVRWGKVCNVYDKFCQHVGS) the chain is on the extracellular side. A helical transmembrane segment spans residues 168 to 188 (SIAVALFASVLLVLLTMLSVF). The Cytoplasmic portion of the chain corresponds to 189–196 (SIYRKIPK).

Belongs to the Casparian strip membrane proteins (CASP) family. In terms of assembly, homodimer and heterodimers.

The protein resides in the cell membrane. This chain is CASP-like protein 1D1, found in Populus trichocarpa (Western balsam poplar).